The primary structure comprises 311 residues: tRNA-cytidine(32) 2-sulfurtransferase (311 aa).

Residues 58 to 63 (SGGKDS) carry the PP-loop motif motif. Residues Cys-133, Cys-136, and Cys-224 each coordinate [4Fe-4S] cluster.

The protein belongs to the TtcA family. Homodimer. Mg(2+) serves as cofactor. The cofactor is [4Fe-4S] cluster.

It is found in the cytoplasm. It catalyses the reaction cytidine(32) in tRNA + S-sulfanyl-L-cysteinyl-[cysteine desulfurase] + AH2 + ATP = 2-thiocytidine(32) in tRNA + L-cysteinyl-[cysteine desulfurase] + A + AMP + diphosphate + H(+). It functions in the pathway tRNA modification. Its function is as follows. Catalyzes the ATP-dependent 2-thiolation of cytidine in position 32 of tRNA, to form 2-thiocytidine (s(2)C32). The sulfur atoms are provided by the cysteine/cysteine desulfurase (IscS) system. This is tRNA-cytidine(32) 2-sulfurtransferase from Polaromonas sp. (strain JS666 / ATCC BAA-500).